The chain runs to 150 residues: Transcription antitermination protein NusB (150 aa).

It belongs to the NusB family.

Functionally, involved in transcription antitermination. Required for transcription of ribosomal RNA (rRNA) genes. Binds specifically to the boxA antiterminator sequence of the ribosomal RNA (rrn) operons. In Streptococcus pyogenes serotype M1, this protein is Transcription antitermination protein NusB.